A 741-amino-acid chain; its full sequence is Cysteine--tRNA ligase, cytoplasmic (741 aa).

Cysteine 46 serves as a coordination point for Zn(2+). A 'HIGH' region motif is present at residues 48 to 58 (PTVYDASHMGH). Residue serine 297 is modified to Phosphoserine. The Zn(2+) site is built by cysteine 340, histidine 365, and glutamate 369. The 'KMSKS' region motif lies at 398-402 (KMSKS). Lysine 401 provides a ligand contact to ATP. A disordered region spans residues 697 to 718 (FDENGLPTHDKEGKEVSKGQIK). Positions 704 to 713 (THDKEGKEVS) are enriched in basic and acidic residues.

The protein belongs to the class-I aminoacyl-tRNA synthetase family. The cofactor is Zn(2+).

The protein localises to the cytoplasm. It carries out the reaction tRNA(Cys) + L-cysteine + ATP = L-cysteinyl-tRNA(Cys) + AMP + diphosphate. The chain is Cysteine--tRNA ligase, cytoplasmic from Drosophila melanogaster (Fruit fly).